The chain runs to 140 residues: Transmembrane protein 107 (140 aa).

2 consecutive transmembrane segments (helical) span residues 7–27 and 53–73; these read LVPS…TIFW and LIIA…GFLS. An N-linked (GlcNAc...) asparagine glycan is attached at asparagine 79. The next 2 membrane-spanning stretches (helical) occupy residues 84–104 and 113–133; these read LLSV…LFEG and IMSF…IAVF.

It is found in the membrane. Functionally, may play a role in cilia formation and embryonic patterning. The sequence is that of Transmembrane protein 107 (tmem107) from Xenopus laevis (African clawed frog).